The following is a 146-amino-acid chain: Putative pre-16S rRNA nuclease (146 aa).

This sequence belongs to the YqgF nuclease family.

It localises to the cytoplasm. Functionally, could be a nuclease involved in processing of the 5'-end of pre-16S rRNA. This is Putative pre-16S rRNA nuclease from Paraburkholderia xenovorans (strain LB400).